A 374-amino-acid chain; its full sequence is Guanine nucleotide-binding protein subunit alpha-15 (374 aa).

The 334-residue stretch at 41–374 (GELKLLLLGT…ARYLDEINLL (334 aa)) folds into the G-alpha domain. The tract at residues 44-57 (KLLLLGTGESGKST) is G1 motif. GTP contacts are provided by residues 49-56 (GTGESGKS), 183-189 (LRSRMPT), 208-212 (DVGGQ), 277-280 (NKTD), and Ala346. The Mg(2+) site is built by Ser56 and Thr189. The tract at residues 181-189 (DVLRSRMPT) is G2 motif. Residues 204–213 (LRIVDVGGQK) are G3 motif. The tract at residues 273-280 (ILFLNKTD) is G4 motif. Positions 344–349 (TCATDT) are G5 motif.

It belongs to the G-alpha family. G(q) subfamily. G proteins are composed of 3 units; alpha, beta and gamma. The alpha chain contains the guanine nucleotide binding site.

Its function is as follows. Guanine nucleotide-binding proteins (G proteins) are involved as modulators or transducers in various transmembrane signaling systems. The protein is Guanine nucleotide-binding protein subunit alpha-15 (GNA15) of Oryctolagus cuniculus (Rabbit).